We begin with the raw amino-acid sequence, 517 residues long: Crotonobetaine/carnitine--CoA ligase (517 aa).

It belongs to the ATP-dependent AMP-binding enzyme family.

It carries out the reaction 4-(trimethylamino)butanoate + ATP + CoA = 4-(trimethylamino)butanoyl-CoA + AMP + diphosphate. The catalysed reaction is crotonobetaine + ATP + CoA = crotonobetainyl-CoA + AMP + diphosphate. It catalyses the reaction (R)-carnitine + ATP + CoA = (R)-carnitinyl-CoA + AMP + diphosphate. Its pathway is amine and polyamine metabolism; carnitine metabolism. Its function is as follows. Catalyzes the transfer of CoA to carnitine, generating the initial carnitinyl-CoA needed for the CaiB reaction cycle. Also has activity toward crotonobetaine and gamma-butyrobetaine. The sequence is that of Crotonobetaine/carnitine--CoA ligase from Escherichia coli O139:H28 (strain E24377A / ETEC).